Consider the following 85-residue polypeptide: Large ribosomal subunit protein bL31 (85 aa).

The segment at 64-85 (KYGMSESQGAGGKGNAKKKDEK) is disordered.

The protein belongs to the bacterial ribosomal protein bL31 family. Type A subfamily. Part of the 50S ribosomal subunit.

In terms of biological role, binds the 23S rRNA. The sequence is that of Large ribosomal subunit protein bL31 from Acaryochloris marina (strain MBIC 11017).